Consider the following 285-residue polypeptide: Gap junction Cx32.2 protein (285 aa).

The Cytoplasmic portion of the chain corresponds to 2 to 19 (GDLGFLSKLLDQVQSHST). A helical membrane pass occupies residues 20–40 (VIGKIWMTVLFLFRIMVLGAG). Topologically, residues 41–76 (AESVWGDEQSDFTCNTQQPGCENVCYDWTFPISHIR) are extracellular. Residues 77-99 (FWVLQIIFVSTPTLIYLGHAMHI) form a helical membrane-spanning segment. Residues 100–148 (IQQETKLRARLSSPGGSRLCKQPKYTNEQGKVKIKGNLLGSYLTQLVFK) are Cytoplasmic-facing. The chain crosses the membrane as a helical span at residues 149 to 171 (IIIEAAFIVGQYYLYGFIMVPMF). The Extracellular segment spans residues 172–194 (PCSKKPCPFTVECYMSRPTEKTI). The helical transmembrane segment at 195 to 217 (FIIFMLVVACVSLLLNVIEVFYL) threads the bilayer. Over 218–285 (ICTRVRCGSR…AKEEKRLLSH (68 aa)) the chain is Cytoplasmic. Positions 264 to 285 (ETSQSIGGSLDGAKEEKRLLSH) are disordered. The segment covering 275 to 285 (GAKEEKRLLSH) has biased composition (basic and acidic residues).

The protein belongs to the connexin family. Beta-type (group I) subfamily. In terms of assembly, a connexon is composed of a hexamer of connexins.

It is found in the cell membrane. The protein localises to the cell junction. The protein resides in the gap junction. Functionally, one gap junction consists of a cluster of closely packed pairs of transmembrane channels, the connexons, through which materials of low MW diffuse from one cell to a neighboring cell. May be involved in ovarian follicular maturation. The protein is Gap junction Cx32.2 protein of Micropogonias undulatus (Atlantic croaker).